Here is a 124-residue protein sequence, read N- to C-terminus: Late histone H2B.2.1 (124 aa).

The disordered stretch occupies residues 1–32 (MPAKQTSGKGAKKAGKAKGRPAGASKTRRRKR). Over residues 10–19 (GAKKAGKAKG) the composition is skewed to basic residues. S111 carries O-linked (GlcNAc) serine glycosylation. K119 is covalently cross-linked (Glycyl lysine isopeptide (Lys-Gly) (interchain with G-Cter in ubiquitin)).

The protein belongs to the histone H2B family. As to quaternary structure, the nucleosome is a histone octamer containing two molecules each of H2A, H2B, H3 and H4 assembled in one H3-H4 heterotetramer and two H2A-H2B heterodimers. The octamer wraps approximately 147 bp of DNA. Monoubiquitination of Lys-119 gives a specific tag for epigenetic transcriptional activation and is also prerequisite for histone H3 'Lys-4' and 'Lys-79' methylation. Post-translationally, glcNAcylation at Ser-111 promotes monoubiquitination of Lys-119. It fluctuates in response to extracellular glucose, and associates with transcribed genes.

The protein resides in the nucleus. It is found in the chromosome. Core component of nucleosome. Nucleosomes wrap and compact DNA into chromatin, limiting DNA accessibility to the cellular machineries which require DNA as a template. Histones thereby play a central role in transcription regulation, DNA repair, DNA replication and chromosomal stability. DNA accessibility is regulated via a complex set of post-translational modifications of histones, also called histone code, and nucleosome remodeling. In Psammechinus miliaris (Green sea urchin), this protein is Late histone H2B.2.1.